The following is a 191-amino-acid chain: Imidazoleglycerol-phosphate dehydratase (191 aa).

It belongs to the imidazoleglycerol-phosphate dehydratase family.

It is found in the cytoplasm. The enzyme catalyses D-erythro-1-(imidazol-4-yl)glycerol 3-phosphate = 3-(imidazol-4-yl)-2-oxopropyl phosphate + H2O. It participates in amino-acid biosynthesis; L-histidine biosynthesis; L-histidine from 5-phospho-alpha-D-ribose 1-diphosphate: step 6/9. The protein is Imidazoleglycerol-phosphate dehydratase of Thermodesulfovibrio yellowstonii (strain ATCC 51303 / DSM 11347 / YP87).